The following is a 379-amino-acid chain: Putative F-box protein At2g33190 (379 aa).

The F-box domain maps to 6 to 53 (NGWSKLYPDLLRSIFESLSCLDFHRAGTVCSNWYAVSRSCPLYPWRIV).

This is Putative F-box protein At2g33190 from Arabidopsis thaliana (Mouse-ear cress).